The chain runs to 316 residues: Pantothenate kinase (316 aa).

An ATP-binding site is contributed by 95–102; that stretch reads GSVAVGKS.

This sequence belongs to the prokaryotic pantothenate kinase family.

It localises to the cytoplasm. It carries out the reaction (R)-pantothenate + ATP = (R)-4'-phosphopantothenate + ADP + H(+). Its pathway is cofactor biosynthesis; coenzyme A biosynthesis; CoA from (R)-pantothenate: step 1/5. The chain is Pantothenate kinase from Shewanella putrefaciens (strain CN-32 / ATCC BAA-453).